A 445-amino-acid polypeptide reads, in one-letter code: MANRKYFGTDGVRGKVGAYPITPDFALKLGWAAGKVLASQGSKMVLIGKDTRISGYMLESALEAGLAAAGLSAAFTGPMPTPAIAYLTRTFRAEAGIVISASHNPYYDNGIKFFSAKGTKLPDEIEEAIEAMLEQPMDCVESAELGKASRINDAAGRYIEFCKGTFPAHLGLEGYKIVVDCANGATYHIAPNVLRELGAEVIEIGTDPNGLNINEKCGATDVTALQAKVVETKADVGLAYDGDGDRIMMVDHLGNKVDGDQILFIIAREALRSGQLKGGVVGTLMSNMSLEIALKMLGVPFLRANVGDRYVLEKMVENDWTLGGENSGHIIIADKNTTGDGIVASLAVLAAMAQHKLSLNELASAVKLFPQVLINVRFAGGENPLESDAVKSVAAEVEKRLEGKGRILLRKSGTEPLIRVMVECQDAELAQQCAEEIAEAVKKIN.

Serine 102 (phosphoserine intermediate) is an active-site residue. Positions 102, 241, 243, and 245 each coordinate Mg(2+). A Phosphoserine modification is found at serine 102.

This sequence belongs to the phosphohexose mutase family. Requires Mg(2+) as cofactor. In terms of processing, activated by phosphorylation.

It carries out the reaction alpha-D-glucosamine 1-phosphate = D-glucosamine 6-phosphate. Its function is as follows. Catalyzes the conversion of glucosamine-6-phosphate to glucosamine-1-phosphate. The polypeptide is Phosphoglucosamine mutase (Haemophilus influenzae (strain ATCC 51907 / DSM 11121 / KW20 / Rd)).